We begin with the raw amino-acid sequence, 531 residues long: Plant UBX domain-containing protein 11 (531 aa).

An N-acetylmethionine modification is found at methionine 1. The segment covering alanine 160–serine 173 has biased composition (low complexity). Disordered stretches follow at residues alanine 160–aspartate 316 and alanine 441–arginine 531. Polar residues-rich tracts occupy residues glutamate 174–glycine 190 and glutamate 201–alanine 214. Over residues valine 290–glutamate 301 the composition is skewed to basic and acidic residues. Residues lysine 312–valine 390 enclose the UBX domain. 2 stretches are compositionally biased toward polar residues: residues alanine 441–asparagine 478 and threonine 486–leucine 496.

As to quaternary structure, interacts with CDC48A.

The protein is Plant UBX domain-containing protein 11 of Arabidopsis thaliana (Mouse-ear cress).